Here is a 132-residue protein sequence, read N- to C-terminus: MSLSDPIANFLTSIRNGQLSMNKVIVVSYSYVIHAILQILLSEGYIDGFTEKSKSSSIKFFEVKLKYYNGAPVISQIARISKPGKRCYCSAKDMPKFYNGLGLYIISTSKGIMSDYNARKAGVGGEILCGVF.

It belongs to the universal ribosomal protein uS8 family. Part of the 30S ribosomal subunit. Contacts proteins S5 and S12.

Functionally, one of the primary rRNA binding proteins, it binds directly to 16S rRNA central domain where it helps coordinate assembly of the platform of the 30S subunit. The sequence is that of Small ribosomal subunit protein uS8 from Ehrlichia canis (strain Jake).